The primary structure comprises 274 residues: Penicillin-insensitive murein endopeptidase (274 aa).

A signal peptide spans 1 to 19; that stretch reads MNKTAIALLALLASSVSLA. 3 disulfides stabilise this stretch: Cys44/Cys265, Cys187/Cys235, and Cys216/Cys223. Residues His110, His113, Asp120, Asp147, His150, and His211 each contribute to the Zn(2+) site. Positions 227–274 are disordered; sequence PLPPPGDGCGAELQSWFEPPKPGTTKPEKKTPPPLPPSCQALLDEHVI.

Belongs to the peptidase M74 family. Dimer. The cofactor is Zn(2+).

Its subcellular location is the periplasm. In terms of biological role, murein endopeptidase that cleaves the D-alanyl-meso-2,6-diamino-pimelyl amide bond that connects peptidoglycan strands. Likely plays a role in the removal of murein from the sacculus. The protein is Penicillin-insensitive murein endopeptidase of Shigella dysenteriae serotype 1 (strain Sd197).